The primary structure comprises 548 residues: Glucose-6-phosphate isomerase (548 aa).

Catalysis depends on E359, which acts as the Proton donor. Active-site residues include H390 and K510.

Belongs to the GPI family.

It localises to the cytoplasm. The catalysed reaction is alpha-D-glucose 6-phosphate = beta-D-fructose 6-phosphate. It participates in carbohydrate biosynthesis; gluconeogenesis. Its pathway is carbohydrate degradation; glycolysis; D-glyceraldehyde 3-phosphate and glycerone phosphate from D-glucose: step 2/4. In terms of biological role, catalyzes the reversible isomerization of glucose-6-phosphate to fructose-6-phosphate. This chain is Glucose-6-phosphate isomerase, found in Gloeobacter violaceus (strain ATCC 29082 / PCC 7421).